Reading from the N-terminus, the 216-residue chain is Phosphoenolpyruvate guanylyltransferase (216 aa).

Positions 150, 165, and 168 each coordinate phosphoenolpyruvate.

The protein belongs to the CofC family.

It catalyses the reaction phosphoenolpyruvate + GTP + H(+) = enolpyruvoyl-2-diphospho-5'-guanosine + diphosphate. It functions in the pathway cofactor biosynthesis; coenzyme F420 biosynthesis. Guanylyltransferase that catalyzes the activation of phosphoenolpyruvate (PEP) as enolpyruvoyl-2-diphospho-5'-guanosine, via the condensation of PEP with GTP. It is involved in the biosynthesis of coenzyme F420, a hydride carrier cofactor. This is Phosphoenolpyruvate guanylyltransferase from Mycobacterium leprae (strain Br4923).